The chain runs to 427 residues: UDP-N-acetylglucosamine 1-carboxyvinyltransferase 1 (427 aa).

23-24 (KN) provides a ligand contact to phosphoenolpyruvate. Arg96 is a UDP-N-acetyl-alpha-D-glucosamine binding site. The active-site Proton donor is the Cys120. Cys120 is modified (2-(S-cysteinyl)pyruvic acid O-phosphothioketal). Residues 125-129 (RPIDL), Asp309, and Val331 contribute to the UDP-N-acetyl-alpha-D-glucosamine site.

This sequence belongs to the EPSP synthase family. MurA subfamily.

The protein localises to the cytoplasm. It catalyses the reaction phosphoenolpyruvate + UDP-N-acetyl-alpha-D-glucosamine = UDP-N-acetyl-3-O-(1-carboxyvinyl)-alpha-D-glucosamine + phosphate. The protein operates within cell wall biogenesis; peptidoglycan biosynthesis. Functionally, cell wall formation. Adds enolpyruvyl to UDP-N-acetylglucosamine. The chain is UDP-N-acetylglucosamine 1-carboxyvinyltransferase 1 from Streptococcus pneumoniae serotype 4 (strain ATCC BAA-334 / TIGR4).